A 602-amino-acid polypeptide reads, in one-letter code: MHKYRTHNCSELQISDVGQEVKLSGWVHRRRDHGNLVFIDLRDHYGIIQIVFTDQNPQLMEDASRLRYESVVTVRGTVVARSEDTINNTLPTGHVEVLAVEFIVESAADTLPFVINTEKDAPEDSRLKHRFLDLRREKLHNNIILRSQIISHIRHLMMARGFTEFQTPILTASSPEGARDFLVPSRMHPGKFYALPQAPQQFKQLLMVSGFDRYFQIAPCFRDEDARADRSPGEFYQLDLEMSFVTQEDVFSTIEPVMYDLFNKFTDKKVSATPFVRIPYNESMLKYGSDKPDLRNTIIISDVTEIFRDSDFTIFRENIRKGSIVRAIPAPKAATMPRSFFDKMIEFAISEGAGGLGYIQFSETGETKGAVAKFLSTQQLDSLKATASISNGDAVFFVSDKKEKAARLAGKVRIRLGEELDLLEKDCFKFCWITDFPFYELNEETGKIDFSHNPFSMPQGGLEALENAKTTEALLELNAYQYDIVCNGIELSSGAIRNHKPDIMYKAFSIAGYSEEEVNKRFGGMIRAFKFGAPPHGGIAPGIDRIVMLLAEATNIREVIAFPLNQQAEDLLMNAPSYVEDKALKELSIMLSPSARKNAKKE.

E176 is a binding site for L-aspartate. The tract at residues 200-203 (QQFK) is aspartate. L-aspartate contacts are provided by R222 and H452. An ATP-binding site is contributed by 222-224 (RDE). Position 490 (E490) interacts with ATP. R497 lines the L-aspartate pocket. 542–545 (GIDR) provides a ligand contact to ATP.

Belongs to the class-II aminoacyl-tRNA synthetase family. Type 1 subfamily. As to quaternary structure, homodimer.

The protein localises to the cytoplasm. The catalysed reaction is tRNA(Asx) + L-aspartate + ATP = L-aspartyl-tRNA(Asx) + AMP + diphosphate. Functionally, aspartyl-tRNA synthetase with relaxed tRNA specificity since it is able to aspartylate not only its cognate tRNA(Asp) but also tRNA(Asn). Reaction proceeds in two steps: L-aspartate is first activated by ATP to form Asp-AMP and then transferred to the acceptor end of tRNA(Asp/Asn). This is Aspartate--tRNA(Asp/Asn) ligase from Rickettsia akari (strain Hartford).